Here is a 422-residue protein sequence, read N- to C-terminus: UDP-N-acetylglucosamine 1-carboxyvinyltransferase (422 aa).

22-23 (KN) contributes to the phosphoenolpyruvate binding site. Arg94 provides a ligand contact to UDP-N-acetyl-alpha-D-glucosamine. Cys118 acts as the Proton donor in catalysis. Cys118 bears the 2-(S-cysteinyl)pyruvic acid O-phosphothioketal mark. UDP-N-acetyl-alpha-D-glucosamine contacts are provided by residues 123–127 (RPVDL), Asp308, and Ile330.

Belongs to the EPSP synthase family. MurA subfamily.

It localises to the cytoplasm. It carries out the reaction phosphoenolpyruvate + UDP-N-acetyl-alpha-D-glucosamine = UDP-N-acetyl-3-O-(1-carboxyvinyl)-alpha-D-glucosamine + phosphate. It participates in cell wall biogenesis; peptidoglycan biosynthesis. Cell wall formation. Adds enolpyruvyl to UDP-N-acetylglucosamine. This chain is UDP-N-acetylglucosamine 1-carboxyvinyltransferase, found in Dinoroseobacter shibae (strain DSM 16493 / NCIMB 14021 / DFL 12).